The sequence spans 321 residues: Outer envelope protein 36, chloroplastic (321 aa).

It belongs to the OEP80 (TC 1.B.33.2) family. As to expression, expressed in germinating seeds.

It is found in the plastid. The protein resides in the chloroplast outer membrane. In terms of biological role, may play a role during plastid development. The polypeptide is Outer envelope protein 36, chloroplastic (Arabidopsis thaliana (Mouse-ear cress)).